Reading from the N-terminus, the 498-residue chain is Probable malate:quinone oxidoreductase (498 aa).

This sequence belongs to the MQO family. It depends on FAD as a cofactor.

The enzyme catalyses (S)-malate + a quinone = a quinol + oxaloacetate. The protein operates within carbohydrate metabolism; tricarboxylic acid cycle; oxaloacetate from (S)-malate (quinone route): step 1/1. In Prochlorococcus marinus (strain MIT 9312), this protein is Probable malate:quinone oxidoreductase.